The following is a 190-amino-acid chain: Pyridoxal 5'-phosphate synthase subunit PdxT (190 aa).

46–48 contacts L-glutamine; the sequence is GES. Catalysis depends on C78, which acts as the Nucleophile. L-glutamine-binding positions include R105 and 134–135; that span reads IR. Active-site charge relay system residues include H170 and E172.

Belongs to the glutaminase PdxT/SNO family. In terms of assembly, in the presence of PdxS, forms a dodecamer of heterodimers. Only shows activity in the heterodimer.

The enzyme catalyses aldehydo-D-ribose 5-phosphate + D-glyceraldehyde 3-phosphate + L-glutamine = pyridoxal 5'-phosphate + L-glutamate + phosphate + 3 H2O + H(+). It catalyses the reaction L-glutamine + H2O = L-glutamate + NH4(+). The protein operates within cofactor biosynthesis; pyridoxal 5'-phosphate biosynthesis. Its function is as follows. Catalyzes the hydrolysis of glutamine to glutamate and ammonia as part of the biosynthesis of pyridoxal 5'-phosphate. The resulting ammonia molecule is channeled to the active site of PdxS. The chain is Pyridoxal 5'-phosphate synthase subunit PdxT from Clostridium beijerinckii (strain ATCC 51743 / NCIMB 8052) (Clostridium acetobutylicum).